The chain runs to 278 residues: Antiviral protein MAP (278 aa).

The first 28 residues, 1–28, serve as a signal peptide directing secretion; that stretch reads MLTTTKVFFLLLTTWITWYAIVNPQSRA. Cys64 and Cys248 form a disulfide bridge. Glu196 is an active-site residue.

The catalysed reaction is Endohydrolysis of the N-glycosidic bond at one specific adenosine on the 28S rRNA.. Inhibits viral infection of plants, and protein synthesis in vitro. In Mirabilis jalapa (Garden four-o'clock), this protein is Antiviral protein MAP.